We begin with the raw amino-acid sequence, 96 residues long: Small ribosomal subunit protein bS18 (96 aa).

The interval 1–20 is disordered; it reads MSHGGKRRSGDGGSEGSSYS.

It belongs to the bacterial ribosomal protein bS18 family. Part of the 30S ribosomal subunit. Forms a tight heterodimer with protein bS6.

Functionally, binds as a heterodimer with protein bS6 to the central domain of the 16S rRNA, where it helps stabilize the platform of the 30S subunit. This chain is Small ribosomal subunit protein bS18, found in Anaplasma phagocytophilum (strain HZ).